The following is a 170-amino-acid chain: Protein FAM209 (170 aa).

The N-terminal stretch at 1 to 20 (MRTLLRWCLFLSLCVSCACA) is a signal peptide. A helical membrane pass occupies residues 56–76 (WLGNKWLWLFVAIMIYVMLKF). Residues 83-107 (KEQHPPGLRGCQLRSPPKKAQNISP) form a disordered region.

In terms of assembly, interacts with DPY19L2. Interacts with CYLC1; the interaction may be relevant for proper acrosome attachment to the nuclear envelope. In terms of tissue distribution, predominately expressed in testis.

Its subcellular location is the nucleus inner membrane. Functionally, required for sperm acrosome biogenesis. This is Protein FAM209 from Mus musculus (Mouse).